Consider the following 612-residue polypeptide: Sulfite reductase [NADPH] hemoprotein beta-component (612 aa).

The segment at 1 to 32 (MDDHKPIDTPDGPAVDTPGIGAHRYEAPPTDR) is disordered. [4Fe-4S] cluster contacts are provided by cysteine 469, cysteine 475, cysteine 514, and cysteine 518. Cysteine 518 is a siroheme binding site.

Belongs to the nitrite and sulfite reductase 4Fe-4S domain family. Alpha(8)-beta(8). The alpha component is a flavoprotein, the beta component is a hemoprotein. Siroheme is required as a cofactor. It depends on [4Fe-4S] cluster as a cofactor.

It carries out the reaction hydrogen sulfide + 3 NADP(+) + 3 H2O = sulfite + 3 NADPH + 4 H(+). The protein operates within sulfur metabolism; hydrogen sulfide biosynthesis; hydrogen sulfide from sulfite (NADPH route): step 1/1. Component of the sulfite reductase complex that catalyzes the 6-electron reduction of sulfite to sulfide. This is one of several activities required for the biosynthesis of L-cysteine from sulfate. In Methylorubrum populi (strain ATCC BAA-705 / NCIMB 13946 / BJ001) (Methylobacterium populi), this protein is Sulfite reductase [NADPH] hemoprotein beta-component.